Consider the following 1889-residue polypeptide: Bromodomain adjacent to zinc finger domain protein 2A (1889 aa).

3 disordered regions span residues 1-59 (MEME…NGLS), 384-433 (FGLN…SPAA), and 479-526 (TTPV…GAVA). A compositionally biased stretch (polar residues) spans 35 to 59 (TNGSPMNFPQQGKSLNGDVNVNGLS). The tract at residues 332 to 726 (EGNPVISALD…ESQTPVQGQA (395 aa)) is required for TTF1 binding. Over residues 423–433 (PAVSPTASPAA) the composition is skewed to low complexity. Composition is skewed to polar residues over residues 479-489 (TTPVTSPQGSP) and 498-509 (QTVSPARKNVSS). At Thr-499 the chain carries Phosphothreonine. Ser-501 is subject to Phosphoserine. In terms of domain architecture, MBD spans 538–609 (IATPEEVRLP…EHFSFSPRMP (72 aa)). Residue Thr-540 is modified to Phosphothreonine. The residue at position 605 (Ser-605) is a Phosphoserine. Positions 638–791 (QAITGKRGRP…ARPSCRADKT (154 aa)) are disordered. 2 consecutive DNA-binding regions (a.T hook) follow at residues 641-653 (TGKRGRPRNNEKA) and 662-674 (KRGRGRPPKIKMP). Residues 648–660 (RNNEKAKNKEVPK) show a composition bias toward basic and acidic residues. Residues 661-670 (VKRGRGRPPK) are compositionally biased toward basic residues. At Lys-672 the chain carries N6-acetyllysine; by KAT8. Residues 678–701 (NKTDNRLPKKLETQEILSEDDKAK) are compositionally biased toward basic and acidic residues. A coiled-coil region spans residues 686 to 813 (KKLETQEILS…QQAILEEMKK (128 aa)). The span at 702–713 (MTKNKKKMRQKV) shows a compositional bias: basic residues. Positions 716–726 (GESQTPVQGQA) are enriched in polar residues. Composition is skewed to basic and acidic residues over residues 731 to 740 (KQDTKSLKQK) and 748 to 791 (AEKE…ADKT). At Lys-790 the chain carries N6-acetyllysine. The DDT domain maps to 839 to 904 (SRAFSDCLTI…LKAALHDPGL (66 aa)). Residue Lys-857 forms a Glycyl lysine isopeptide (Lys-Gly) (interchain with G-Cter in SUMO2) linkage. Residues 1039–1063 (EETSGIEEEEEEENTTAVHGRRGRK) are disordered. Ser-1042 carries the phosphoserine modification. A compositionally biased stretch (acidic residues) spans 1042-1052 (SGIEEEEEEEN). Residues Lys-1141 and Lys-1163 each participate in a glycyl lysine isopeptide (Lys-Gly) (interchain with G-Cter in SUMO2) cross-link. Disordered stretches follow at residues 1147–1247 (LMEV…GQSQ) and 1269–1397 (LSSS…GRPP). Ser-1174 carries the post-translational modification Phosphoserine. A DNA-binding region (a.T hook 3) is located at residues 1176 to 1188 (ARSRGRPRKPKPG). Composition is skewed to polar residues over residues 1190–1231 (LQPQ…QPSS), 1269–1278 (LSSSVLTPDS), and 1331–1346 (DQPTPSLQLLASSKPM). Residues Ser-1374, Ser-1377, and Ser-1383 each carry the phosphoserine modification. Residues 1390–1402 (PKRRGRPPSKFFK) constitute a DNA-binding region (a.T hook 4). Ser-1545 is modified (phosphoserine). Glycyl lysine isopeptide (Lys-Gly) (interchain with G-Cter in SUMO2) cross-links involve residues Lys-1662 and Lys-1695. The PHD-type zinc-finger motif lies at 1662–1712 (KVTCLVCRKGDNDEFLLLCDGCDRGCHIYCHRPKMEAVPEGDWFCAVCLSQ). The segment at 1720 to 1778 (QRPGFPKRGQKRKSSFPLTFPEGDSRRRMLSRSRDSPAVPRYPEDGLSPPKRRRHSMRS) is disordered. Ser-1733 is subject to Phosphoserine. The residue at position 1738 (Thr-1738) is a Phosphothreonine. Positions 1742–1754 (GDSRRRMLSRSRD) are enriched in basic and acidic residues. Phosphoserine occurs at positions 1755 and 1767. Positions 1769 to 1778 (PKRRRHSMRS) are enriched in basic residues. Residues 1777-1881 (RSHHSDLTFC…RFFESRWEEF (105 aa)) form the Bromo domain.

It belongs to the WAL family. In terms of assembly, component of the NoRC-1 ISWI chromatin remodeling complex at least composed of SMARCA1 and BAZ2A/TIP5, which regulates the spacing of histone octamers on the DNA template to facilitate access to DNA. Within the NoRC-1 ISWI chromatin remodeling complex interacts with SMARCA1; the interaction is direct. Component of the NoRC-5 ISWI chromatin remodeling complex (also called the NoRC nucleolar-remodeling complex), at least composed of SMARCA5/SNF2H and BAZ2A/TIP5, which regulates the spacing of histone octamers on the DNA template to facilitate access to DNA. Within the NoRC-5 ISWI chromatin remodeling complexes interacts with SMARCA5/SNF2H; the interaction is direct. Interacts with TTF1; the interaction is required for recruitment of the NoRC-5 ISWI chromatin remodeling complex to rDNA. Interacts with HDAC1. Interacts with SIN3A. Interacts with DNMT1 and DNM3B. Interacts with BEND3 and USP21. Post-translationally, ubiquitinated. Deubiquitinated by USP21 leading to its stabilization. In terms of processing, acetylation at Lys-672 by KAT8/MOF promotes its dissociation from pRNA, affecting heterochromatin formation, nucleosome positioning and rDNA silencing. Deacetylation by SIRT1 in late S phase enhances pRNA-binding, allowing de novo DNA methylation and heterochromatin formation. Acetylation is high during S phase and declines to background levels in late S phase when the silent copies of rRNA genes are replicated.

It is found in the nucleus. The protein resides in the nucleolus. Functionally, regulatory subunit of the ATP-dependent NoRC-1 and NoRC-5 ISWI chromatin remodeling complexes, which form ordered nucleosome arrays on chromatin and facilitate access to DNA during DNA-templated processes such as DNA replication, transcription, and repair. Both complexes regulate the spacing of nucleosomes along the chromatin and have the ability to slide mononucleosomes to the center of a DNA template. Directly stimulates the ATPase activity of SMARCA5 in the NoRC-5 ISWI chromatin remodeling complex. The NoRC-1 ISWI chromatin remodeling complex has a lower ATP hydrolysis rate than the NoRC-5 ISWI chromatin remodeling complex. Within the NoRC-5 ISWI chromatin remodeling complex, mediates silencing of a fraction of rDNA by recruiting histone-modifying enzymes and DNA methyltransferases, leading to heterochromatin formation and transcriptional silencing. In the complex, it plays a central role by being recruited to rDNA and by targeting chromatin modifying enzymes such as HDAC1, leading to repress RNA polymerase I transcription. Recruited to rDNA via its interaction with TTF1 and its ability to recognize and bind histone H4 acetylated on 'Lys-16' (H4K16ac), leading to deacetylation of H4K5ac, H4K8ac, H4K12ac but not H4K16ac. Specifically binds pRNAs, 150-250 nucleotide RNAs that are complementary in sequence to the rDNA promoter; pRNA-binding is required for heterochromatin formation and rDNA silencing. The protein is Bromodomain adjacent to zinc finger domain protein 2A (Baz2a) of Mus musculus (Mouse).